Here is a 288-residue protein sequence, read N- to C-terminus: Acetyl-coenzyme A carboxylase carboxyl transferase subunit beta (288 aa).

The 255-residue stretch at 34–288 (LFAKCPACKH…HLVAFHGGGQ (255 aa)) folds into the CoA carboxyltransferase N-terminal domain. 4 residues coordinate Zn(2+): Cys38, Cys41, Cys56, and Cys59. The segment at 38–59 (CPACKHMIYKKDLGLAKICPTC) adopts a C4-type zinc-finger fold.

The protein belongs to the AccD/PCCB family. In terms of assembly, acetyl-CoA carboxylase is a heterohexamer composed of biotin carboxyl carrier protein (AccB), biotin carboxylase (AccC) and two subunits each of ACCase subunit alpha (AccA) and ACCase subunit beta (AccD). Zn(2+) is required as a cofactor.

The protein resides in the cytoplasm. It catalyses the reaction N(6)-carboxybiotinyl-L-lysyl-[protein] + acetyl-CoA = N(6)-biotinyl-L-lysyl-[protein] + malonyl-CoA. Its pathway is lipid metabolism; malonyl-CoA biosynthesis; malonyl-CoA from acetyl-CoA: step 1/1. In terms of biological role, component of the acetyl coenzyme A carboxylase (ACC) complex. Biotin carboxylase (BC) catalyzes the carboxylation of biotin on its carrier protein (BCCP) and then the CO(2) group is transferred by the transcarboxylase to acetyl-CoA to form malonyl-CoA. In Streptococcus pyogenes serotype M3 (strain ATCC BAA-595 / MGAS315), this protein is Acetyl-coenzyme A carboxylase carboxyl transferase subunit beta.